A 22-amino-acid polypeptide reads, in one-letter code: Caerin-3.3 (22 aa).

Lys22 is modified (lysine amide).

As to expression, expressed by the skin parotoid and/or rostral glands.

It is found in the secreted. Its function is as follows. Antibacterial peptide, that adopts an alpha helical conformation which can disrupt bacterial membranes. Each caerin displays a different antimicrobial specificity. In Ranoidea caerulea (Green tree frog), this protein is Caerin-3.3.